We begin with the raw amino-acid sequence, 241 residues long: ATP synthase subunit a (241 aa).

The next 5 helical transmembrane spans lie at 30-50 (GQVF…VLVG), 89-109 (LPFI…GALI), 128-148 (INTT…AGLS), 193-213 (LAVG…VMLL), and 214-234 (GLFT…FYIG).

Belongs to the ATPase A chain family. In terms of assembly, F-type ATPases have 2 components, CF(1) - the catalytic core - and CF(0) - the membrane proton channel. CF(1) has five subunits: alpha(3), beta(3), gamma(1), delta(1), epsilon(1). CF(0) has four main subunits: a, b, b' and c.

It is found in the cellular thylakoid membrane. Its function is as follows. Key component of the proton channel; it plays a direct role in the translocation of protons across the membrane. The chain is ATP synthase subunit a from Synechococcus sp. (strain CC9605).